A 302-amino-acid chain; its full sequence is Urease accessory protein UreD (302 aa).

The protein belongs to the UreD family. UreD, UreF and UreG form a complex that acts as a GTP-hydrolysis-dependent molecular chaperone, activating the urease apoprotein by helping to assemble the nickel containing metallocenter of UreC. The UreE protein probably delivers the nickel.

It localises to the cytoplasm. In terms of biological role, required for maturation of urease via the functional incorporation of the urease nickel metallocenter. The polypeptide is Urease accessory protein UreD (Pseudoalteromonas translucida (strain TAC 125)).